Consider the following 443-residue polypeptide: Phosphatidate cytidylyltransferase 2 (443 aa).

The segment covering 1–38 (MTELRQRAVREDAPPEDKESESEAKLDGETASDSESRA) has biased composition (basic and acidic residues). Residues 1 to 51 (MTELRQRAVREDAPPEDKESESEAKLDGETASDSESRAETAPPPTSIDDTP) are disordered. Ser-20 bears the Phosphoserine mark. Residue Thr-30 is modified to Phosphothreonine. A phosphoserine mark is found at Ser-32, Ser-34, and Ser-36. Position 50 is a phosphothreonine (Thr-50). Transmembrane regions (helical) follow at residues 78 to 98 (MIAF…MIVM), 129 to 149 (WYFL…DYFF), 165 to 185 (HRFI…LSLV), 212 to 232 (LVIH…SCVI), 261 to 281 (GFIG…YVMS), and 338 to 358 (SALS…ASGF).

Belongs to the CDS family. As to quaternary structure, homodimer.

The protein resides in the endoplasmic reticulum membrane. It carries out the reaction a 1,2-diacyl-sn-glycero-3-phosphate + CTP + H(+) = a CDP-1,2-diacyl-sn-glycerol + diphosphate. It catalyses the reaction 1-octadecanoyl-2-(5Z,8Z,11Z,14Z-eicosatetraenoyl)-sn-glycero-3-phosphate + CTP + H(+) = 1-octadecanoyl-2-(5Z,8Z,11Z,14Z-eicosatetraenoyl)-sn-glycero-3-cytidine-5'-diphosphate + diphosphate. The enzyme catalyses 1-octadecanoyl-2-(9Z,12Z-octadecadienoyl)-sn-glycero-3-phosphate + CTP + H(+) = 1-octadecanoyl-2-(9Z,12Z-octadecadienoyl)-sn-glycero-3-cytidine-5'-diphosphate + diphosphate. The catalysed reaction is 1-hexadecanoyl-2-(5Z,8Z,11Z,14Z-eicosatetraenoyl)-sn-glycero-3-phosphate + CTP + H(+) = 1-hexadecanoyl-2-(5Z,8Z,11Z,14Z-eicosatetraenoyl)-sn-glycero-3-cytidine-5'-diphosphate + diphosphate. It carries out the reaction 1,2-di-(5Z,8Z,11Z,14Z)-eicosatetraenoyl-sn-glycero-3-phosphate + CTP + H(+) = 1,2-di-(5Z,8Z,11Z,14Z-eicosatetraenoyl)-sn-glycero-3-cytidine-5'-diphosphate + diphosphate. It catalyses the reaction 1-octadecanoyl-2-(9Z-octadecenoyl)-sn-glycero-3-phosphate + CTP + H(+) = 1-octadecanoyl-2-(9Z-octadecenoyl)-sn-glycero-3-cytidine-5'-diphosphate + diphosphate. The enzyme catalyses 1-octadecanoyl-2-(4Z,7Z,10Z,13Z,16Z,19Z-docosahexaenoyl)-sn-glycero-3-phosphate + CTP + H(+) = 1-octadecanoyl-2-(4Z,7Z,10Z,13Z,16Z,19Z-docosahexaenoyl)-sn-glycero-3-cytidine-5'-diphosphate + diphosphate. The catalysed reaction is 1,2-di-(9Z,12Z-octadecadienoyl)-sn-glycero-3-phosphate + CTP + H(+) = 1,2-di-(9Z,12Z-octadecadienoyl)-sn-glycero-3-cytidine-5'-diphosphate + diphosphate. It carries out the reaction 1,2-di-(9Z-octadecenoyl)-sn-glycero-3-phosphate + CTP + H(+) = 1,2-di-(9Z-octadecenoyl)-sn-glycero-3-cytidine-5'-diphosphate + diphosphate. It functions in the pathway phospholipid metabolism; CDP-diacylglycerol biosynthesis; CDP-diacylglycerol from sn-glycerol 3-phosphate: step 3/3. Functionally, catalyzes the conversion of phosphatidic acid (PA) to CDP-diacylglycerol (CDP-DAG), an essential intermediate in the synthesis of phosphatidylglycerol, cardiolipin and phosphatidylinositol. Exhibits specificity for the nature of the acyl chains at the sn-1 and sn-2 positions in the substrate, PA and the preferred acyl chain composition is 1-stearoyl-2-arachidonoyl-sn-phosphatidic acid. Plays an important role in regulating the growth and maturation of lipid droplets which are storage organelles at the center of lipid and energy homeostasis. The sequence is that of Phosphatidate cytidylyltransferase 2 from Rattus norvegicus (Rat).